A 443-amino-acid chain; its full sequence is Glucose-6-phosphate isomerase (443 aa).

E285 functions as the Proton donor in the catalytic mechanism. Active-site residues include H306 and K420.

This sequence belongs to the GPI family.

It is found in the cytoplasm. The catalysed reaction is alpha-D-glucose 6-phosphate = beta-D-fructose 6-phosphate. It participates in carbohydrate biosynthesis; gluconeogenesis. It functions in the pathway carbohydrate degradation; glycolysis; D-glyceraldehyde 3-phosphate and glycerone phosphate from D-glucose: step 2/4. In terms of biological role, catalyzes the reversible isomerization of glucose-6-phosphate to fructose-6-phosphate. This Staphylococcus haemolyticus (strain JCSC1435) protein is Glucose-6-phosphate isomerase.